Consider the following 236-residue polypeptide: Small ribosomal subunit protein uS2c (236 aa).

The protein belongs to the universal ribosomal protein uS2 family.

The protein localises to the plastid. It is found in the chloroplast. The protein is Small ribosomal subunit protein uS2c (rps2) of Glycine max (Soybean).